A 330-amino-acid chain; its full sequence is Aspartate--ammonia ligase (330 aa).

Belongs to the class-II aminoacyl-tRNA synthetase family. AsnA subfamily.

The protein resides in the cytoplasm. The catalysed reaction is L-aspartate + NH4(+) + ATP = L-asparagine + AMP + diphosphate + H(+). It functions in the pathway amino-acid biosynthesis; L-asparagine biosynthesis; L-asparagine from L-aspartate (ammonia route): step 1/1. The polypeptide is Aspartate--ammonia ligase (Photorhabdus laumondii subsp. laumondii (strain DSM 15139 / CIP 105565 / TT01) (Photorhabdus luminescens subsp. laumondii)).